The chain runs to 216 residues: Fibroblast growth factor 17 (216 aa).

The first 22 residues, 1-22 (MGAARLLPNLTLCLQLLILCCQ), serve as a signal peptide directing secretion. The N-linked (GlcNAc...) asparagine glycan is linked to asparagine 137. The interval 195-216 (FEFVGSAPTRRTKRTRRPQSQT) is disordered. Basic residues predominate over residues 204–216 (RRTKRTRRPQSQT).

This sequence belongs to the heparin-binding growth factors family. Interacts with FGFR3 and FGFR4.

The protein localises to the secreted. In terms of biological role, plays an important role in the regulation of embryonic development and as signaling molecule in the induction and patterning of the embryonic brain. Required for normal brain development. This Mus musculus (Mouse) protein is Fibroblast growth factor 17 (Fgf17).